We begin with the raw amino-acid sequence, 254 residues long: Imidazole glycerol phosphate synthase subunit HisF (254 aa).

Catalysis depends on residues Asp-12 and Asp-132.

It belongs to the HisA/HisF family. Heterodimer of HisH and HisF.

It is found in the cytoplasm. It carries out the reaction 5-[(5-phospho-1-deoxy-D-ribulos-1-ylimino)methylamino]-1-(5-phospho-beta-D-ribosyl)imidazole-4-carboxamide + L-glutamine = D-erythro-1-(imidazol-4-yl)glycerol 3-phosphate + 5-amino-1-(5-phospho-beta-D-ribosyl)imidazole-4-carboxamide + L-glutamate + H(+). The protein operates within amino-acid biosynthesis; L-histidine biosynthesis; L-histidine from 5-phospho-alpha-D-ribose 1-diphosphate: step 5/9. Functionally, IGPS catalyzes the conversion of PRFAR and glutamine to IGP, AICAR and glutamate. The HisF subunit catalyzes the cyclization activity that produces IGP and AICAR from PRFAR using the ammonia provided by the HisH subunit. The polypeptide is Imidazole glycerol phosphate synthase subunit HisF (Symbiobacterium thermophilum (strain DSM 24528 / JCM 14929 / IAM 14863 / T)).